We begin with the raw amino-acid sequence, 268 residues long: Small ribosomal subunit protein eS1 (268 aa).

The segment at 1-21 (MAVGKNKGLSKGGKKGGKKKV) is disordered.

The protein belongs to the eukaryotic ribosomal protein eS1 family. In terms of assembly, component of the small ribosomal subunit. Mature ribosomes consist of a small (40S) and a large (60S) subunit. The 40S subunit contains about 33 different proteins and 1 molecule of RNA (18S). The 60S subunit contains about 49 different proteins and 3 molecules of RNA (28S, 5.8S and 5S).

It is found in the cytoplasm. Essential for oogenesis; required for late follicle cell development. The protein is Small ribosomal subunit protein eS1 of Drosophila virilis (Fruit fly).